The primary structure comprises 181 residues: Protein Abitram (181 aa).

Belongs to the ABITRAM family. In terms of assembly, interacts with F-actin. Interacts with G-actin.

The protein resides in the nucleus speckle. It is found in the cell projection. It localises to the lamellipodium. The protein localises to the nucleus. Its subcellular location is the growth cone. The protein resides in the dendrite. Actin-binding protein that regulates actin polymerization, filopodia dynamics and increases the branching of proximal dendrites of developing neurons. This Homo sapiens (Human) protein is Protein Abitram.